The chain runs to 676 residues: Probable LRR receptor-like serine/threonine-protein kinase At4g31250 (676 aa).

Positions 1 to 26 are cleaved as a signal peptide; sequence MTRDDKFPIVYSLLLIVLLFVSPIYG. Topologically, residues 27–242 are extracellular; that stretch reads DGDADALLKF…LLPCRYTRPP (216 aa). N-linked (GlcNAc...) asparagine glycosylation is found at Asn-42, Asn-73, and Asn-83. LRR repeat units lie at residues 98–122, 123–146, 148–171, 172–195, and 197–218; these read IRGL…IDGL, VSLA…LFSG, KALL…LGKL, PKLT…KQKN, and VTVN…GLMN. Asn-218 carries an N-linked (GlcNAc...) asparagine glycan. The helical transmembrane segment at 243–263 threads the bilayer; sequence FFTVFLLALTILAVVVLITVF. Residues 264–676 lie on the Cytoplasmic side of the membrane; the sequence is LSVCILSRRQ…RAMTEEFSLM (413 aa). Over residues 319–330 the composition is skewed to polar residues; it reads TVQRDSTATSGA. Positions 319–347 are disordered; sequence TVQRDSTATSGAISVGGLSPDEDKRGDQR. Residues 366–640 enclose the Protein kinase domain; the sequence is RASAEVLGSG…HEAVDRIEEV (275 aa). Ser-368 is subject to Phosphoserine. Residues 372 to 380 and Lys-394 each bind ATP; that span reads LGSGGFGSS. Residues Ser-446 and Ser-543 each carry the phosphoserine modification. The interval 641-676 is disordered; the sequence is DRDAGGGQESVRSSYVTASDGDHRSSRAMTEEFSLM.

This sequence belongs to the protein kinase superfamily. Ser/Thr protein kinase family.

It is found in the membrane. It carries out the reaction L-seryl-[protein] + ATP = O-phospho-L-seryl-[protein] + ADP + H(+). It catalyses the reaction L-threonyl-[protein] + ATP = O-phospho-L-threonyl-[protein] + ADP + H(+). The sequence is that of Probable LRR receptor-like serine/threonine-protein kinase At4g31250 from Arabidopsis thaliana (Mouse-ear cress).